The chain runs to 511 residues: Probable DNA ligase (511 aa).

Glutamate 208 contacts ATP. Lysine 210 functions as the N6-AMP-lysine intermediate in the catalytic mechanism. Positions 215, 230, 259, 299, 377, and 383 each coordinate ATP.

The protein belongs to the ATP-dependent DNA ligase family. The cofactor is Mg(2+).

The catalysed reaction is ATP + (deoxyribonucleotide)n-3'-hydroxyl + 5'-phospho-(deoxyribonucleotide)m = (deoxyribonucleotide)n+m + AMP + diphosphate.. In terms of biological role, DNA ligase that seals nicks in double-stranded DNA during DNA replication, DNA recombination and DNA repair. The protein is Probable DNA ligase of Streptomyces griseus subsp. griseus (strain JCM 4626 / CBS 651.72 / NBRC 13350 / KCC S-0626 / ISP 5235).